The primary structure comprises 476 residues: UDP-glucose 6-dehydrogenase (476 aa).

NAD(+)-binding positions include 7-12 (GAGYVG), D32, R37, 85-89 (VNTPT), 126-127 (ST), and E161. Substrate is bound by residues 157–161 (EFLAE), 216–220 (KLAAN), R256, and 263–269 (QASVGFG). The active-site Nucleophile is the C272. Residue 272–275 (CFQK) participates in NAD(+) binding. 334 to 335 (FK) is a substrate binding site. R342 is an NAD(+) binding site. R439 is a substrate binding site.

The protein belongs to the UDP-glucose/GDP-mannose dehydrogenase family.

It catalyses the reaction UDP-alpha-D-glucose + 2 NAD(+) + H2O = UDP-alpha-D-glucuronate + 2 NADH + 3 H(+). It participates in nucleotide-sugar biosynthesis; UDP-alpha-D-glucuronate biosynthesis; UDP-alpha-D-glucuronate from UDP-alpha-D-glucose: step 1/1. Functionally, involved in the biosynthesis of glycosaminoglycans; hyaluronan, chondroitin sulfate and heparan sulfate. Required for wingless signaling in different tissues. In Drosophila melanogaster (Fruit fly), this protein is UDP-glucose 6-dehydrogenase (sgl).